Reading from the N-terminus, the 796-residue chain is MGRRARDRRRQLQPQQRRERSGGGGGGGDDQAGWAGGYPEIVKENELFERYYREQRIVPDGEWDAFMAALREPLPATLRITGYKSHAREILHCLKEKYFRELQHLEVDGQKVEMPQALSWYPEELAWHTNLSRKILRKSPQLERFHQFLVSETECGNISRQEAVSMIPPLLLNVNPDHKILDMCAAPGSKTAQLIEMLHADMNVPFPKGFVIANDVDNKRCYLLVHQAKRLNSPCIMVVNHDASSIPNLQVDVDGRKETLFYDRILCDVPCSGDGTMRKNIDVWKKWTTQNSLQLHGLQLRIATRGVEQLAEGGRMVYSTCSLNPIENEAVIASLLEKSQGALELADVSSELPGLKRMPGITKWKVMLKDGQWFEEWKDVPSNRQTQIRPTMFPIKEEEKLKAMNLERCIRILPHHQNTGGFFVAVLIKKSPMPWNKRQPKVHQKLPGKTEDTEVTATNAGDGSEDATEKPTLAEDEEPKKVQELQNSDTEQSKKGVCGPPPSKKMKLFGFKEDPFVFLPEDDPLFLPIQKFYALDPSFPKMNLLTRTQEGKKRQLYMVSKELRNVLLNNSEKMKVINTGIKVWSRNSDGEQFGCAFRLAQEGIYTLYPFIHARIVNVCIEDVKILLTQENPFLSKFSSETQRKVKDMAMGSIVLKYEPDPEKPDDLQCPIVLCGWQGKTSLRAFVPKNERLHYLRMMGVEVFKAKRKEGESEGKTEEEVQCRPAQTEEGMDVEDKERDAVTKMEAEIDEESPRSPVESSAMEIENKSEDSDQCSKNTNSHINQESKDMNTNNVKD.

The span at 1-11 (MGRRARDRRRQ) shows a compositional bias: basic residues. Residues 1 to 36 (MGRRARDRRRQLQPQQRRERSGGGGGGGDDQAGWAG) form a disordered region. A compositionally biased stretch (gly residues) spans 22-36 (GGGGGGGDDQAGWAG). S-adenosyl-L-methionine contacts are provided by residues 184-190 (CAAPGSK), D215, D242, and D268. Residue C321 is the Nucleophile of the active site. Disordered stretches follow at residues 435–501 (WNKR…CGPP) and 707–796 (RKEG…NVKD). 3 stretches are compositionally biased toward basic and acidic residues: residues 467–483 (ATEK…KKVQ), 708–721 (KEGE…EEVQ), and 733–746 (VEDK…KMEA). The segment covering 774–783 (CSKNTNSHIN) has biased composition (polar residues). Residues 784 to 796 (QESKDMNTNNVKD) are compositionally biased toward basic and acidic residues.

It belongs to the class I-like SAM-binding methyltransferase superfamily. RsmB/NOP family. TRM4 subfamily.

The protein resides in the nucleus. It localises to the nucleolus. It is found in the cytoplasm. Its subcellular location is the mitochondrion. The protein localises to the cytoskeleton. The protein resides in the spindle. It localises to the secreted. It is found in the extracellular exosome. It catalyses the reaction cytidine(48) in tRNA + S-adenosyl-L-methionine = 5-methylcytidine(48) in tRNA + S-adenosyl-L-homocysteine + H(+). It carries out the reaction cytidine(49) in tRNA + S-adenosyl-L-methionine = 5-methylcytidine(49) in tRNA + S-adenosyl-L-homocysteine + H(+). The enzyme catalyses cytidine(50) in tRNA + S-adenosyl-L-methionine = 5-methylcytidine(50) in tRNA + S-adenosyl-L-homocysteine + H(+). The catalysed reaction is cytidine(34) in tRNA precursor + S-adenosyl-L-methionine = 5-methylcytidine(34) in tRNA precursor + S-adenosyl-L-homocysteine + H(+). It catalyses the reaction a cytidine in mRNA + S-adenosyl-L-methionine = a 5-methylcytidine in mRNA + S-adenosyl-L-homocysteine + H(+). RNA cytosine C(5)-methyltransferase that methylates cytosine to 5-methylcytosine (m5C) in various RNAs, such as tRNAs, mRNAs and some long non-coding RNAs (lncRNAs). Involved in various processes, such as epidermal stem cell differentiation, testis differentiation and maternal to zygotic transition during early development: acts by increasing protein synthesis; cytosine C(5)-methylation promoting tRNA stability and preventing mRNA decay. Methylates cytosine to 5-methylcytosine (m5C) at positions 34 and 48 of intron-containing tRNA(Leu)(CAA) precursors, and at positions 48, 49 and 50 of tRNA(Gly)(GCC) precursors. tRNA methylation is required generation of RNA fragments derived from tRNAs (tRFs). Also mediates C(5)-methylation of mitochondrial tRNAs. Catalyzes cytosine C(5)-methylation of mRNAs, leading to stabilize them and prevent mRNA decay. Cytosine C(5)-methylation of mRNAs also regulates mRNA export. Also mediates cytosine C(5)-methylation of non-coding RNAs, such as vault RNAs (vtRNAs), promoting their processing into regulatory small RNAs. Required for proper spindle assembly and chromosome segregation, independently of its methyltransferase activity. The chain is RNA cytosine-C(5)-methyltransferase NSUN2 from Gallus gallus (Chicken).